Here is a 477-residue protein sequence, read N- to C-terminus: Argininosuccinate synthase (477 aa).

ATP is bound by residues 17–25 (AFSGGLDTS) and Ala-43. An L-citrulline-binding site is contributed by Tyr-99. 2 residues coordinate ATP: Gly-129 and Thr-131. L-aspartate-binding residues include Thr-131, Asn-135, and Asp-136. Asn-135 serves as a coordination point for L-citrulline. Asp-136 is an ATP binding site. 2 residues coordinate L-citrulline: Arg-139 and Ser-192. ATP is bound at residue Asp-194. 3 residues coordinate L-citrulline: Thr-201, Glu-203, and Glu-280. The segment at 450-477 (DQITENPEVQAEPEEEALDAAAMEAGTD) is disordered. A compositionally biased stretch (low complexity) spans 468–477 (DAAAMEAGTD).

It belongs to the argininosuccinate synthase family. Type 2 subfamily. As to quaternary structure, homotetramer.

The protein resides in the cytoplasm. It carries out the reaction L-citrulline + L-aspartate + ATP = 2-(N(omega)-L-arginino)succinate + AMP + diphosphate + H(+). Its pathway is amino-acid biosynthesis; L-arginine biosynthesis; L-arginine from L-ornithine and carbamoyl phosphate: step 2/3. This chain is Argininosuccinate synthase, found in Nocardioides sp. (strain ATCC BAA-499 / JS614).